Here is an 802-residue protein sequence, read N- to C-terminus: Bifunctional purine biosynthetic protein ADE5,7 (802 aa).

Residues 1–444 (MPEITAFPQP…FRRDIAYRAL (444 aa)) are GARS. Residues 126 to 339 (KEFMARHNIP…LAEVLLACVE (214 aa)) form the ATP-grasp domain. 157–218 (KPFTSGRSVI…EEYLSGPEIS (62 aa)) contributes to the ATP binding site. Residues E307 and N309 each contribute to the Mg(2+) site. Positions 455 to 788 (LTYAAAGVSV…EAWVIGEVQE (334 aa)) are AIRS.

This sequence in the N-terminal section; belongs to the GARS family. The protein in the C-terminal section; belongs to the AIR synthase family. In terms of assembly, homodimer. The cofactor is Mg(2+). Requires Mn(2+) as cofactor.

It is found in the cytoplasm. The protein resides in the cytosol. The catalysed reaction is 2-formamido-N(1)-(5-O-phospho-beta-D-ribosyl)acetamidine + ATP = 5-amino-1-(5-phospho-beta-D-ribosyl)imidazole + ADP + phosphate + H(+). It carries out the reaction 5-phospho-beta-D-ribosylamine + glycine + ATP = N(1)-(5-phospho-beta-D-ribosyl)glycinamide + ADP + phosphate + H(+). The protein operates within purine metabolism; IMP biosynthesis via de novo pathway; 5-amino-1-(5-phospho-D-ribosyl)imidazole from N(2)-formyl-N(1)-(5-phospho-D-ribosyl)glycinamide: step 2/2. It functions in the pathway purine metabolism; IMP biosynthesis via de novo pathway; N(1)-(5-phospho-D-ribosyl)glycinamide from 5-phospho-alpha-D-ribose 1-diphosphate: step 2/2. In terms of biological role, catalyzes the second and fifth step in the 'de novo' purine biosynthesis pathway; contains phosphoribosylamine--glycine ligase (GARS) and phosphoribosylformylglycinamidine cyclo-ligase (AIRS) activities. This Cryptococcus neoformans var. grubii serotype A (strain H99 / ATCC 208821 / CBS 10515 / FGSC 9487) (Filobasidiella neoformans var. grubii) protein is Bifunctional purine biosynthetic protein ADE5,7.